Reading from the N-terminus, the 1268-residue chain is MNDLKRSIQKFQFNVAEPEAFKRWLARNKLTFVEDGKNLSERERTRLLLGCLEESTFHRYEDSQREISDIYSISFDDTVTALTKIFGSTKSLMMRRQQCLQICRANGLSQDYLDYTNSISDAVLDSKLSSMTSDEWSIFLFLRGLNSPGDEKAKLYLMQYVEASEKKNEKLKLSDVHDEWMKFIQMHQQSKIVSVKPSKSSQQVDVNKVDTNRSKKKKKPIPRKPEKSSQDSKKKGEIPTCFYCNKKGHYATNCRSNPKTGNQGGNKGKSKGCDSVHVDGLDVKTEHQAKHRMSVEVCGKDVAFQLDTGSMITLISVKCWEKLGSPPLEKVPHRISCANGTPMAVKGRCLVKFKLKGIEYTEYVYVRDRQTNLLGTSWLNLCPQMRSALAQIVNQVSTSETEASRLEVMLKNDFPEVFKDGLGLCTKEKAEFRTEENAVPVFKRARPVPYGSLEAVETELNRLQEMGVIVPITYAKWAAPIVVIKKKGTGKIRVCADFKCSGLNAALKDEFHPLPTSEDIFSRLKGTVYSQIDLKDAYLQVELDEEAQKLAVINTHRGIFKYLRMTFGLKPAPASFQKIMDKMVSGLTGVAVYWDDIIISASSIEEHEKILRELFERFKEYGFRVSAEKCAFAQKQVTFLGFVDEHGRRPDSKKTEAIRSMKAPTDQKQLASFLGAADWLSRMMQDHQQNADDVVIAEIYDDDDDEDDSIIQKLNPVTETDIRFESQKDHEVSSVVKLVRNDSWKPKPSTEIEKHWIRYRDRLKLIHGCLLLDDRVIVPKSLQKIVLKQLHEGHPGIVQMKQKARSFVFWRGLDSDIENMVRHCNNCQENSKMPRVVPLNPWPVPEAPWKRIHIDFAGPLNGCYLLVVVDAKTKYAEVKLTRSISAVTTIDLLEEIFSIHGYPETIISDNGTQLTSHLFAQMCQSHGIEHKTSAVYYPRSNGAAERFVDTLKRGIAKIKGEGSVNQQILNKFLISYRNTPHSALNGSTPAECHFGRKIRTTMSLLMPTDRVLKVPKLTQYQQNMKHHYELRNGARAKAFQVNQKVYVQVHHGNKSQWKHGVIRRKFGGVLYEVQVGDRMQKSHVNQIRTRYGDYSRSSVNPRLSSDPLGFVGESGGDEMSRNDDPVVTSNGSSTDVNRGSRITSELKKKESNAVRGQPCGSCSPTNNDVSAPGYASRSHPTTDPSHSVRRSSRIRRVLDRYGSSVEHPSTSTGTPRGSTSTQLGQASTRNGSRYTASGRNPSCQGNRYSSIRGEGVTARRERVRTTWR.

Residues 191–206 (KIVSVKPSKSSQQVDV) show a composition bias toward low complexity. Disordered regions lie at residues 191–235 (KIVS…SKKK) and 253–273 (NCRS…SKGC). Positions 223 to 235 (RKPEKSSQDSKKK) are enriched in basic and acidic residues. The segment at 239–256 (PTCFYCNKKGHYATNCRS) adopts a CCHC-type zinc-finger fold. Residues 465 to 644 (EMGVIVPITY…KQVTFLGFVD (180 aa)) enclose the Reverse transcriptase domain. One can recognise an Integrase catalytic domain in the interval 844-997 (VPEAPWKRIH…TPAECHFGRK (154 aa)). The tract at residues 1092 to 1268 (GDYSRSSVNP…RRERVRTTWR (177 aa)) is disordered. Polar residues-rich tracts occupy residues 1127–1143 (VTSN…SRIT) and 1160–1169 (GSCSPTNNDV). Positions 1208 to 1221 (PSTSTGTPRGSTST) are enriched in low complexity. The span at 1222 to 1249 (QLGQASTRNGSRYTASGRNPSCQGNRYS) shows a compositional bias: polar residues. Over residues 1257-1268 (TARRERVRTTWR) the composition is skewed to basic and acidic residues.

This is an uncharacterized protein from Caenorhabditis elegans.